A 162-amino-acid chain; its full sequence is Probable chorismate pyruvate-lyase (162 aa).

Residues R54, L92, and E149 each contribute to the substrate site.

Belongs to the UbiC family.

The protein resides in the cytoplasm. It carries out the reaction chorismate = 4-hydroxybenzoate + pyruvate. The protein operates within cofactor biosynthesis; ubiquinone biosynthesis. Removes the pyruvyl group from chorismate, with concomitant aromatization of the ring, to provide 4-hydroxybenzoate (4HB) for the ubiquinone pathway. This chain is Probable chorismate pyruvate-lyase, found in Methylococcus capsulatus (strain ATCC 33009 / NCIMB 11132 / Bath).